The chain runs to 825 residues: Putative pentatricopeptide repeat-containing protein At2g01510 (825 aa).

PPR repeat units lie at residues 47–77 (DTCR…MPHK), 78–108 (NTVS…MPDR), 109–143 (TVVT…SSCT), 146–180 (DHVT…GFDT), 183–213 (FLTV…IPEK), 214–248 (DSVT…GHQP), 249–283 (SDFT…GFSR), 284–314 (DASV…MPEL), 315–349 (DFVS…GFDR), 350–384 (RNFP…TADS), 385–415 (ILHV…LPQR), 416–450 (TTVS…NLRA), 451–485 (DQST…GNLE), 486–516 (NVFS…MPDR), 517–551 (NAVS…GLQP), 552–587 (DSVS…GITP), and 588–618 (KKKH…MPFE). The tract at residues 623 to 699 (MWSSVLNACR…VPAYSWVEVN (77 aa)) is type E motif. The interval 700–730 (HKIHVFSSNDQTHPNGDEIVRKINELTAEIE) is type E(+) motif. Positions 731–825 (REGYKPDTSS…EGVCSCGDYW (95 aa)) are type DYW motif.

The protein belongs to the PPR family. PCMP-H subfamily.

The sequence is that of Putative pentatricopeptide repeat-containing protein At2g01510 (PCMP-H36) from Arabidopsis thaliana (Mouse-ear cress).